Here is a 1070-residue protein sequence, read N- to C-terminus: Protocadherin-8 (1070 aa).

An N-terminal signal peptide occupies residues 1-29 (MSPAKRWGSPCLFPLQLFSLCWVLSVAQS). Cadherin domains follow at residues 30-135 (KTVR…APRF), 136-245 (PRAQ…SPAF), 247-354 (QGAV…APEI), 393-497 (QEAG…APIF), 498-609 (TKPV…SPIL), and 615-721 (ANGS…VPAS). The Extracellular portion of the chain corresponds to 30 to 747 (KTVRYSTFEE…SGPSLQWDTP (718 aa)). Asn616 carries an N-linked (GlcNAc...) asparagine glycan. The segment covering 716–725 (SAVPASSGSP) has biased composition (low complexity). The disordered stretch occupies residues 716–740 (SAVPASSGSPEHSRPPGSRLAPSGP). The helical transmembrane segment at 748-768 (LIVIIVLAGSCTLLLAAIIAI) threads the bilayer. At 769 to 1070 (ATTCNRRKKE…SPKKGINENV (302 aa)) the chain is on the cytoplasmic side. Disordered regions lie at residues 777-859 (KEVR…TGES), 906-928 (REAE…DSDS), and 1046-1070 (IGVP…NENV). 2 stretches are compositionally biased toward basic and acidic residues: residues 780–790 (RKGGALREERP) and 906–921 (REAE…KGDS). Ser1053 is subject to Phosphoserine.

The N-terminal extracellular domain forms homophilic interactions; these interactions activate p38 MAPK via TAOK2 and trigger endocytosis. Interacts with CDH2; this interaction may lead to CDH2 cointernalization. Interacts with CDH11. Interacts with TAOK2.

Its subcellular location is the cell membrane. It is found in the cell projection. It localises to the dendrite. The protein resides in the presynaptic cell membrane. The protein localises to the postsynaptic cell membrane. Calcium-dependent cell-adhesion protein. May play a role in activity-induced synaptic reorganization underlying long term memory. Could be involved in CDH2 internalization through TAOK2/p38 MAPK pathway. In hippocampal neurons, may play a role in the down-regulation of dendritic spines, maybe through its action on CDH2 endocytosis. This is Protocadherin-8 (Pcdh8) from Mus musculus (Mouse).